We begin with the raw amino-acid sequence, 786 residues long: Sucrose synthase (786 aa).

A GT-B glycosyltransferase region spans residues M259–N736.

The protein belongs to the glycosyltransferase 1 family. As to quaternary structure, homotetramer.

The enzyme catalyses an NDP-alpha-D-glucose + D-fructose = a ribonucleoside 5'-diphosphate + sucrose + H(+). In terms of biological role, catalyzes the reversible conversion of sucrose and a nucleotide disphosphate (NDP) into fructose and NDP-glucose; although the reaction is freely reversible in vitro, the physiological reaction seems to be sucrose cleavage. Unlike characterized plant enzymes prefers ADP as a cosubstrate, whereas plants prefer UDP. Its preference for ADP over UDP suggests it may directly link sucrose and glycogen metabolism. In Denitrovibrio acetiphilus (strain DSM 12809 / NBRC 114555 / N2460), this protein is Sucrose synthase.